A 425-amino-acid chain; its full sequence is WD repeat-containing protein JIP5 (425 aa).

WD repeat units follow at residues 9–48 (QLDS…SDDS), 71–110 (RHKG…VTAK), 117–158 (LANG…AKSA), 219–262 (ELLS…DQDE), and 321–358 (LRQE…DVPE). Positions 354 to 425 (QDVPEDDEDE…HGILHFSGLA (72 aa)) are disordered. Composition is skewed to acidic residues over residues 356 to 368 (VPED…EEEA) and 378 to 396 (SDED…EDDE). The span at 399–414 (QKRKKRRKGKGGKQAK) shows a compositional bias: basic residues.

This sequence belongs to the WD repeat WDR55 family.

The protein resides in the nucleus. Its subcellular location is the nucleolus. The polypeptide is WD repeat-containing protein JIP5 (JIP5) (Phaeosphaeria nodorum (strain SN15 / ATCC MYA-4574 / FGSC 10173) (Glume blotch fungus)).